The primary structure comprises 330 residues: Malate dehydrogenase (330 aa).

Position 12–18 (12–18 (GAAGQIG)) interacts with NAD(+). Substrate-binding residues include arginine 93 and arginine 99. NAD(+) is bound by residues asparagine 106, glutamine 113, and 130–132 (VGN). Residues asparagine 132 and arginine 166 each coordinate substrate. Histidine 191 functions as the Proton acceptor in the catalytic mechanism.

This sequence belongs to the LDH/MDH superfamily. MDH type 2 family.

It catalyses the reaction (S)-malate + NAD(+) = oxaloacetate + NADH + H(+). Functionally, catalyzes the reversible oxidation of malate to oxaloacetate. In Azoarcus sp. (strain BH72), this protein is Malate dehydrogenase.